Consider the following 278-residue polypeptide: Putative transposase for insertion sequence element IS986/IS6110 (278 aa).

The region spanning 101 to 268 is the Integrase catalytic domain; it reads GPPAPNRLWV…VPPVELEAAY (168 aa).

In terms of biological role, involved in the transposition of the insertion sequence. The chain is Putative transposase for insertion sequence element IS986/IS6110 from Mycobacterium bovis (strain ATCC BAA-935 / AF2122/97).